A 177-amino-acid chain; its full sequence is Large ribosomal subunit protein uL6 (177 aa).

Belongs to the universal ribosomal protein uL6 family. As to quaternary structure, part of the 50S ribosomal subunit.

This protein binds to the 23S rRNA, and is important in its secondary structure. It is located near the subunit interface in the base of the L7/L12 stalk, and near the tRNA binding site of the peptidyltransferase center. The polypeptide is Large ribosomal subunit protein uL6 (Natronomonas pharaonis (strain ATCC 35678 / DSM 2160 / CIP 103997 / JCM 8858 / NBRC 14720 / NCIMB 2260 / Gabara) (Halobacterium pharaonis)).